A 254-amino-acid polypeptide reads, in one-letter code: 3-dehydroquinate dehydratase (254 aa).

3-dehydroquinate-binding positions include 47 to 49 (EWR) and Arg83. His144 serves as the catalytic Proton donor/acceptor. The active-site Schiff-base intermediate with substrate is the Lys171. Residues Arg214, Ser233, and Gln237 each coordinate 3-dehydroquinate.

The protein belongs to the type-I 3-dehydroquinase family. Homodimer.

The catalysed reaction is 3-dehydroquinate = 3-dehydroshikimate + H2O. The protein operates within metabolic intermediate biosynthesis; chorismate biosynthesis; chorismate from D-erythrose 4-phosphate and phosphoenolpyruvate: step 3/7. Involved in the third step of the chorismate pathway, which leads to the biosynthesis of aromatic amino acids. Catalyzes the cis-dehydration of 3-dehydroquinate (DHQ) and introduces the first double bond of the aromatic ring to yield 3-dehydroshikimate. This is 3-dehydroquinate dehydratase from Clostridium botulinum (strain Eklund 17B / Type B).